The sequence spans 391 residues: uncharacterized protein (391 aa).

Belongs to the mimivirus L17x/L18x family.

This is an uncharacterized protein from Acanthamoeba polyphaga (Amoeba).